A 308-amino-acid polypeptide reads, in one-letter code: uncharacterized protein (308 aa).

The next 10 membrane-spanning stretches (helical) occupy residues 6 to 26 (VVLI…FGIL), 31 to 51 (AKIL…FLTI), 63 to 83 (FLKL…LAYL), 100 to 120 (ILVS…LGMF), 128 to 148 (AIFC…YVGI), 162 to 182 (MAKF…FFGF), 195 to 215 (LNYL…LSLS), 221 to 241 (FGVF…PATA), 257 to 277 (VLLV…GTLY), and 287 to 307 (SIFI…WILL).

This sequence belongs to the auxin efflux carrier (TC 2.A.69) family.

The protein resides in the cell membrane. This is an uncharacterized protein from Methanocaldococcus jannaschii (strain ATCC 43067 / DSM 2661 / JAL-1 / JCM 10045 / NBRC 100440) (Methanococcus jannaschii).